We begin with the raw amino-acid sequence, 587 residues long: Serine/threonine-protein phosphatase 2A 65 kDa regulatory subunit A gamma isoform (587 aa).

Serine 2 carries the post-translational modification N-acetylserine. 14 HEAT repeats span residues 2-42 (SMVD…ALGE), 44-80 (RTRK…YVGG), 81-119 (VEYA…QMRE), 158-194 (DVLK…AATI), 197-235 (AHLK…LLEP), 236-274 (QDCV…AVGP), 276-313 (PTRT…ILNP), 314-352 (ELAI…VLGK), 353-391 (DATI…VIGI), 393-430 (LLSQ…QLGV), 432-469 (FFDE…EFGP), 470-508 (EWAM…VMGS), 509-547 (EITC…IVDQ), and 549-586 (VVEN…VMMS).

It belongs to the phosphatase 2A regulatory subunit A family. PP2A consists of a common heterodimeric core enzyme, composed of a 36 kDa catalytic subunit (subunit C) and a 65 kDa constant regulatory subunit (subunit A), that associates with a variety of regulatory subunits such as subunits B (the R2/B/PR55/B55, R3/B''/PR72/PR130/PR59 and R5/B'/B56 families). Interacts with CHIP. Interacts with SRK2E/OST1. In terms of processing, ubiquitinated. CHIP-mediated ubiquitination enhances phosphatase activity after an abiotic stress such as low temperature or darkness. In terms of tissue distribution, expressed ubiquitously at stable levels. However, higher protein levels in roots and flowers (at protein level).

The protein localises to the cytoplasm. It is found in the cytosol. It localises to the nucleus. Its function is as follows. The A subunit of protein phosphatase 2A serves as a scaffolding molecule to coordinate the assembly of the catalytic subunit and a variable regulatory B subunit. Involved during developmental process such as seedling and floral developments. Seems to act as a negative regulator of PP2A catalytic activity. This chain is Serine/threonine-protein phosphatase 2A 65 kDa regulatory subunit A gamma isoform (PP2AA3), found in Arabidopsis thaliana (Mouse-ear cress).